The chain runs to 352 residues: Histidinol-phosphate aminotransferase (352 aa).

The residue at position 211 (Lys211) is an N6-(pyridoxal phosphate)lysine.

The protein belongs to the class-II pyridoxal-phosphate-dependent aminotransferase family. Histidinol-phosphate aminotransferase subfamily. In terms of assembly, homodimer. It depends on pyridoxal 5'-phosphate as a cofactor.

The enzyme catalyses L-histidinol phosphate + 2-oxoglutarate = 3-(imidazol-4-yl)-2-oxopropyl phosphate + L-glutamate. The protein operates within amino-acid biosynthesis; L-histidine biosynthesis; L-histidine from 5-phospho-alpha-D-ribose 1-diphosphate: step 7/9. The chain is Histidinol-phosphate aminotransferase from Haemophilus influenzae (strain PittEE).